The primary structure comprises 337 residues: uncharacterized protein (337 aa).

29-36 (GPKSSGKS) contributes to the ATP binding site.

It belongs to the archaeal ATPase family.

This is an uncharacterized protein from Methanocaldococcus jannaschii (strain ATCC 43067 / DSM 2661 / JAL-1 / JCM 10045 / NBRC 100440) (Methanococcus jannaschii).